Reading from the N-terminus, the 857-residue chain is MDTTPELLLCQRIRDKLKADKQVLFAEFDANNQVNPLVTKLRRAVDVALTEAWTGLELPGDVALVAVGGYGRGELFPHSDVDVLLLLPGEPDAKMAAKLERFIGLCWDLGLEIGSSVRTVDDCIRESAADITIRTSLLEARLLIGNKALFKSLQTRYQADMDAADFFQAKLLEMRQRHAKYQDTPYALEPNCKESPGGLRDLQVILWMTEAARLGDSWKQLFERGLLTEREAQELTRNERLLRTIRARLHLLAGRRQDVLVFDLQTALAEAFGYRQTTNKRASEQLMRRYYWAAKAVTQLNSVLLLNIEAMLFPSESMVTREINDRFVERQGMLEITSDDLYERNPHAILETFLLYERTPGVKGLSPRTLRGLYNARTVMDASWRNDPVNRRLFLAIVQEPQGITHALRLMNQTSVLGRYLINFRRIVGQMQHDLFHVYTVDQHILMVVRNMRRFAIVEHTHEFPFCSQLMAGFDRPWVLWVAALFHDIAKGRGGDHSKLGTVDARRFCKQHGISREDTDLIAWLVEHHLTMSHVAQKQDLTDPDVVKAFAQVVGNGRYLTALYLLTVADIRGTSPKVWNAWKGKLLEDLYRITLRVLGGARLDTHSLWAQKRDDTIAQLRLKAFDPELAKPLWDKLDMSFFMRQDARDIAWLTRSLFNKVNSPNPVVKARISPAGEGLQVAVYVKDQPDLFARICGYFERKAFSIQDAKIETTRDGYALDTFQITDPGLAGDYRDILTLVEHELGERVRLECPLPDPTQGRLSRQSRSFPIKPRVDLRPDERGQYYLLSVSANDRTGLLYAIARVLAKHRVSVHSARINTLGERVEDVFLVDGSRLAADNRLQIQLEQDLLDALAI.

The tract at residues 1–322 (MDTTPELLLC…FPSESMVTRE (322 aa)) is uridylyltransferase. Residues 323-679 (INDRFVERQG…ARISPAGEGL (357 aa)) form a uridylyl-removing region. The HD domain occupies 441–563 (VDQHILMVVR…VGNGRYLTAL (123 aa)). 2 ACT domains span residues 680 to 760 (QVAV…DPTQ) and 788 to 857 (LLSV…ALAI).

Belongs to the GlnD family. Requires Mg(2+) as cofactor.

It catalyses the reaction [protein-PII]-L-tyrosine + UTP = [protein-PII]-uridylyl-L-tyrosine + diphosphate. The enzyme catalyses [protein-PII]-uridylyl-L-tyrosine + H2O = [protein-PII]-L-tyrosine + UMP + H(+). Uridylyltransferase (UTase) activity is inhibited by glutamine, while glutamine activates uridylyl-removing (UR) activity. Modifies, by uridylylation and deuridylylation, the PII regulatory proteins (GlnB and homologs), in response to the nitrogen status of the cell that GlnD senses through the glutamine level. Under low glutamine levels, catalyzes the conversion of the PII proteins and UTP to PII-UMP and PPi, while under higher glutamine levels, GlnD hydrolyzes PII-UMP to PII and UMP (deuridylylation). Thus, controls uridylylation state and activity of the PII proteins, and plays an important role in the regulation of nitrogen assimilation and metabolism. In Cupriavidus metallidurans (strain ATCC 43123 / DSM 2839 / NBRC 102507 / CH34) (Ralstonia metallidurans), this protein is Bifunctional uridylyltransferase/uridylyl-removing enzyme.